The primary structure comprises 476 residues: Ribulose bisphosphate carboxylase large chain (476 aa).

Positions 124 and 174 each coordinate substrate. K176 serves as the catalytic Proton acceptor. K178 is a substrate binding site. Residues K202, D204, and E205 each coordinate Mg(2+). K202 bears the N6-carboxylysine mark. H295 functions as the Proton acceptor in the catalytic mechanism. Positions 296, 328, and 380 each coordinate substrate.

Belongs to the RuBisCO large chain family. Type I subfamily. Heterohexadecamer of 8 large chains and 8 small chains; disulfide-linked. The disulfide link is formed within the large subunit homodimers. Forms complexes of many stoichiometries with Raf1 with and without RbcS. RuBisCO interacts with the C-terminus of CcmM. It depends on Mg(2+) as a cofactor. Post-translationally, the disulfide bond which can form in the large chain dimeric partners within the hexadecamer appears to be associated with oxidative stress and protein turnover.

The protein resides in the carboxysome. The enzyme catalyses 2 (2R)-3-phosphoglycerate + 2 H(+) = D-ribulose 1,5-bisphosphate + CO2 + H2O. It catalyses the reaction D-ribulose 1,5-bisphosphate + O2 = 2-phosphoglycolate + (2R)-3-phosphoglycerate + 2 H(+). RuBisCO catalyzes two reactions: the carboxylation of D-ribulose 1,5-bisphosphate, the primary event in carbon dioxide fixation, as well as the oxidative fragmentation of the pentose substrate in the photorespiration process. Both reactions occur simultaneously and in competition at the same active site. The polypeptide is Ribulose bisphosphate carboxylase large chain (Nostoc sp. (strain PCC 7120 / SAG 25.82 / UTEX 2576)).